The following is a 266-amino-acid chain: Glutamate racemase (266 aa).

Residues 10–11 (DS) and 42–43 (YG) each bind substrate. The active-site Proton donor/acceptor is the Cys73. 74–75 (NT) provides a ligand contact to substrate. Cys183 acts as the Proton donor/acceptor in catalysis. 184–185 (TH) serves as a coordination point for substrate.

Belongs to the aspartate/glutamate racemases family.

It catalyses the reaction L-glutamate = D-glutamate. It participates in cell wall biogenesis; peptidoglycan biosynthesis. Functionally, provides the (R)-glutamate required for cell wall biosynthesis. This Lactobacillus johnsonii (strain CNCM I-12250 / La1 / NCC 533) protein is Glutamate racemase.